Reading from the N-terminus, the 693-residue chain is Polyribonucleotide nucleotidyltransferase (693 aa).

Residues Asp-486 and Asp-492 each contribute to the Mg(2+) site. A KH domain is found at 553-612 (PRFSSMRIDTEKIKDVIGKGGATIRSITEQTGTTIEIEDDGSVKIAATDKAAAANARRLI). In terms of domain architecture, S1 motif spans 622–690 (GRIYDAKVTK…RQGRVRLSIK (69 aa)).

This sequence belongs to the polyribonucleotide nucleotidyltransferase family. As to quaternary structure, component of the RNA degradosome, which is a multiprotein complex involved in RNA processing and mRNA degradation. Requires Mg(2+) as cofactor.

It is found in the cytoplasm. It catalyses the reaction RNA(n+1) + phosphate = RNA(n) + a ribonucleoside 5'-diphosphate. Involved in mRNA degradation. Catalyzes the phosphorolysis of single-stranded polyribonucleotides processively in the 3'- to 5'-direction. The polypeptide is Polyribonucleotide nucleotidyltransferase (Dichelobacter nodosus (strain VCS1703A)).